We begin with the raw amino-acid sequence, 282 residues long: ESX-1 secretion-associated protein EspG1 (282 aa).

The protein belongs to the EspG family. As to quaternary structure, interacts specifically with ESX-1-dependent PE/PPE proteins.

It localises to the cytoplasm. In terms of biological role, part of the ESX-1 / type VII specialized secretion system (T7SS), which exports several proteins including EsxA and EsxB. Specific chaperone for cognate PE/PPE proteins, plays an important role in preventing aggregation of PE/PPE dimers. Also plays a role in DNA conjugation, in at least recipient strain. The protein is ESX-1 secretion-associated protein EspG1 of Mycolicibacterium smegmatis (strain ATCC 700084 / mc(2)155) (Mycobacterium smegmatis).